The following is a 36-amino-acid chain: Photosystem I reaction center subunit VIII (36 aa).

A helical membrane pass occupies residues 9–29 (ILVPLVGLIFPAIAMTSLFIY).

Belongs to the PsaI family.

Its subcellular location is the plastid. The protein resides in the chloroplast thylakoid membrane. Functionally, may help in the organization of the PsaL subunit. The polypeptide is Photosystem I reaction center subunit VIII (Tupiella akineta (Green alga)).